Here is a 230-residue protein sequence, read N- to C-terminus: Ribonuclease 3 (230 aa).

Residues 10–133 (DPRLLSRIGY…IIGAIYLDSG (124 aa)) form the RNase III domain. Residue Glu-46 coordinates Mg(2+). Asp-50 is an active-site residue. The Mg(2+) site is built by Asp-119 and Glu-122. Glu-122 is a catalytic residue. Residues 161–230 (DPKSRLQEYL…AAEILKLLEQ (70 aa)) enclose the DRBM domain.

Belongs to the ribonuclease III family. In terms of assembly, homodimer. It depends on Mg(2+) as a cofactor.

The protein localises to the cytoplasm. The catalysed reaction is Endonucleolytic cleavage to 5'-phosphomonoester.. Functionally, digests double-stranded RNA. Involved in the processing of primary rRNA transcript to yield the immediate precursors to the large and small rRNAs (23S and 16S). Processes some mRNAs, and tRNAs when they are encoded in the rRNA operon. Processes pre-crRNA and tracrRNA of type II CRISPR loci if present in the organism. The chain is Ribonuclease 3 (rnc) from Acinetobacter pittii (strain PHEA-2).